A 949-amino-acid chain; its full sequence is Protocadherin alpha-11 (949 aa).

Residues 1–29 (MFGFQRRGLGTPRLQLWLLLLEFWEVGSG) form the signal peptide. Cadherin domains are found at residues 30-133 (QLHY…PPVF), 157-242 (ASDA…DPEF), 243-349 (DKSE…SPEV), 350-454 (AVTS…APAF), 455-564 (AQPE…APAL), and 580-677 (VPRS…APKA). Residues 30 to 696 (QLHYSVSEEA…SPEAALVDVN (667 aa)) lie on the Extracellular side of the membrane. N-linked (GlcNAc...) asparagine glycosylation is found at Asn265 and Asn304. Asn547 is a glycosylation site (N-linked (GlcNAc...) asparagine). The chain crosses the membrane as a helical span at residues 697–717 (VYLIIAICVVSSLLVLTLLLY). The Cytoplasmic segment spans residues 718–949 (TALWWSATPT…GNSTTDNSDQ (232 aa)). PXXP repeat units lie at residues 733–736 (PGKP) and 773–776 (PSLP). Residues 733-893 (PGKPTLVCSR…PDKFIIPGSP (161 aa)) are 6 X 4 AA repeats of P-X-X-P. 2 disordered regions span residues 753–807 (RRQR…DWRY) and 826–949 (ILRA…NSDQ). The segment covering 780 to 789 (NKEEEGERQE) has biased composition (basic and acidic residues). 4 PXXP repeats span residues 795–798 (PGQP), 831–834 (PGGP), 872–875 (PGNP), and 890–893 (PGSP). Positions 908 to 922 (DKSDFITFGKKEETK) are enriched in basic and acidic residues.

The protein resides in the cell membrane. Potential calcium-dependent cell-adhesion protein. May be involved in the establishment and maintenance of specific neuronal connections in the brain. The sequence is that of Protocadherin alpha-11 (PCDHA11) from Homo sapiens (Human).